The primary structure comprises 469 residues: Arginine biosynthesis bifunctional protein ArgJ, mitochondrial (469 aa).

Positions 199, 228, 239, 325, 464, and 469 each coordinate substrate. T239 functions as the Nucleophile in the catalytic mechanism.

Belongs to the ArgJ family. In terms of assembly, heterodimer of an alpha and a beta chain. In terms of processing, the alpha and beta chains are autoproteolytically processed from a single precursor protein within the mitochondrion.

Its subcellular location is the mitochondrion matrix. The enzyme catalyses N(2)-acetyl-L-ornithine + L-glutamate = N-acetyl-L-glutamate + L-ornithine. It catalyses the reaction L-glutamate + acetyl-CoA = N-acetyl-L-glutamate + CoA + H(+). It functions in the pathway amino-acid biosynthesis; L-arginine biosynthesis; L-ornithine and N-acetyl-L-glutamate from L-glutamate and N(2)-acetyl-L-ornithine (cyclic): step 1/1. Its pathway is amino-acid biosynthesis; L-arginine biosynthesis; N(2)-acetyl-L-ornithine from L-glutamate: step 1/4. Catalyzes two activities which are involved in the cyclic version of arginine biosynthesis: the synthesis of acetylglutamate from glutamate and acetyl-CoA, and of ornithine by transacetylation between acetylornithine and glutamate. This chain is Arginine biosynthesis bifunctional protein ArgJ, mitochondrial, found in Neurospora crassa (strain ATCC 24698 / 74-OR23-1A / CBS 708.71 / DSM 1257 / FGSC 987).